The sequence spans 151 residues: Allatostatin-A (151 aa).

The N-terminal stretch at 1–21 is a signal peptide; the sequence is MNSLHAHLLLLAVCCVGYIAS. The propeptide occupies 22–54; that stretch reads SPVIGQDQRSGDSDADVLLAADEMADNGGDNID. Leucine amide is present on residues Leu64, Leu88, and Leu99. Residues 103–135 constitute a propeptide that is removed on maturation; sequence SDYDYDQDNEIDYRVPPANYLAAERAVRPGRQN. Positions 131 to 151 are disordered; the sequence is PGRQNKRTTRPQPFNFGLGRR. Leu148 carries the leucine amide modification.

It belongs to the allatostatin family.

The protein localises to the secreted. Functionally, may act as a neurotransmitter or neuromodulator. The polypeptide is Allatostatin-A (AstA) (Drosophila melanogaster (Fruit fly)).